A 148-amino-acid chain; its full sequence is Cell division protein SepF (148 aa).

A disordered region spans residues 1–59 (MNNKFKDFFGFGDNDSYEERDAYEEHYDEQEEMQNSNRPTNSRDSNVVSIKAGQAGSGP). The span at 33–48 (MQNSNRPTNSRDSNVV) shows a compositional bias: polar residues.

It belongs to the SepF family. Homodimer. Interacts with FtsZ.

It is found in the cytoplasm. Cell division protein that is part of the divisome complex and is recruited early to the Z-ring. Probably stimulates Z-ring formation, perhaps through the cross-linking of FtsZ protofilaments. Its function overlaps with FtsA. The sequence is that of Cell division protein SepF from Lactobacillus delbrueckii subsp. bulgaricus (strain ATCC BAA-365 / Lb-18).